The following is a 213-amino-acid chain: NADH dehydrogenase [ubiquinone] iron-sulfur protein 7, mitochondrial (213 aa).

A mitochondrion-targeting transit peptide spans Met-1–Leu-31. The segment covering Ser-30–Ser-42 has biased composition (low complexity). The disordered stretch occupies residues Ser-30 to Thr-52. 4 residues coordinate [4Fe-4S] cluster: Cys-88, Cys-89, Cys-153, and Cys-183.

The protein belongs to the complex I 20 kDa subunit family. Complex I is composed of about 45 different subunits. This is a component of the iron-sulfur (IP) fragment of the enzyme. [4Fe-4S] cluster is required as a cofactor.

Its subcellular location is the mitochondrion. It carries out the reaction a ubiquinone + NADH + 5 H(+)(in) = a ubiquinol + NAD(+) + 4 H(+)(out). Functionally, core subunit of the mitochondrial membrane respiratory chain NADH dehydrogenase (Complex I) that is believed to belong to the minimal assembly required for catalysis. Complex I functions in the transfer of electrons from NADH to the respiratory chain. The immediate electron acceptor for the enzyme is believed to be ubiquinone. This chain is NADH dehydrogenase [ubiquinone] iron-sulfur protein 7, mitochondrial, found in Solanum tuberosum (Potato).